The sequence spans 149 residues: MAKKITGYVKLQVPAGAANPSPPIGPALGQRGLNIMEFCKAFNAKTAQMEKGTPIPVIITAYQDRSFTFEMKQPPVTFFLKKAVGLKIGKKPASGSKTPGKGPTVGKITEAQLREIAEKKMPDLNCDSVDAAVAMIRGSARAMGLEVVA.

This sequence belongs to the universal ribosomal protein uL11 family. Part of the ribosomal stalk of the 50S ribosomal subunit. Interacts with L10 and the large rRNA to form the base of the stalk. L10 forms an elongated spine to which L12 dimers bind in a sequential fashion forming a multimeric L10(L12)X complex. One or more lysine residues are methylated.

Functionally, forms part of the ribosomal stalk which helps the ribosome interact with GTP-bound translation factors. This chain is Large ribosomal subunit protein uL11, found in Methylorubrum extorquens (strain CM4 / NCIMB 13688) (Methylobacterium extorquens).